An 83-amino-acid chain; its full sequence is Defensin-1 (83 aa).

The N-terminal stretch at 1–33 (MAGKGVGSRLSTLFLLVLLVITIGMMQVQVAEG) is a signal peptide. 4 cysteine pairs are disulfide-bonded: C36–C82, C47–C67, C53–C76, and C57–C78.

The protein belongs to the DEFL family.

Its subcellular location is the secreted. Functionally, plant defense peptide. Has antifungal activity against B.cinera, F.oxysporum, F.solani and H.annosum with IC(50) values of 0.4 ug/ml, 2.9 ug/ml, 0.9 ug/ml and 1.4 ug/ml, respectively. Has modest antifungal activity against C.albicans and T.reesei. Causes thickening of F.oxysporum hyphae and an increase in their branching. Lacks antibacterial activity against the Gram-negative bacteria E.coli and E.carotovora. The chain is Defensin-1 from Pinus sylvestris (Scotch pine).